Here is a 394-residue protein sequence, read N- to C-terminus: Probable dual specificity protein phosphatase DDB_G0281963 (394 aa).

One can recognise a Tyrosine-protein phosphatase domain in the interval 2–142 (NDVSRIFPGF…LKKYELILKK (141 aa)). Cysteine 86 (phosphocysteine intermediate) is an active-site residue. The disordered stretch occupies residues 147–191 (PQIVEKESEEEDDDEDDDDDDYDSDEDDDDDSEDDDFEEEFDNVV). Residues 153–188 (ESEEEDDDEDDDDDDYDSDEDDDDDSEDDDFEEEFD) are compositionally biased toward acidic residues.

The protein belongs to the protein-tyrosine phosphatase family. Non-receptor class dual specificity subfamily.

It catalyses the reaction O-phospho-L-tyrosyl-[protein] + H2O = L-tyrosyl-[protein] + phosphate. The enzyme catalyses O-phospho-L-seryl-[protein] + H2O = L-seryl-[protein] + phosphate. The catalysed reaction is O-phospho-L-threonyl-[protein] + H2O = L-threonyl-[protein] + phosphate. Its function is as follows. Has a dual specificity toward Ser/Thr and Tyr-containing proteins. This Dictyostelium discoideum (Social amoeba) protein is Probable dual specificity protein phosphatase DDB_G0281963.